Consider the following 99-residue polypeptide: Photosystem II reaction center Psb28 protein (99 aa).

The protein belongs to the Psb28 family. Part of the photosystem II complex.

It localises to the cell inner membrane. This Gloeobacter violaceus (strain ATCC 29082 / PCC 7421) protein is Photosystem II reaction center Psb28 protein.